An 89-amino-acid chain; its full sequence is Small ribosomal subunit protein uS15 (89 aa).

It belongs to the universal ribosomal protein uS15 family. In terms of assembly, part of the 30S ribosomal subunit. Forms a bridge to the 50S subunit in the 70S ribosome, contacting the 23S rRNA.

One of the primary rRNA binding proteins, it binds directly to 16S rRNA where it helps nucleate assembly of the platform of the 30S subunit by binding and bridging several RNA helices of the 16S rRNA. In terms of biological role, forms an intersubunit bridge (bridge B4) with the 23S rRNA of the 50S subunit in the ribosome. This chain is Small ribosomal subunit protein uS15, found in Polynucleobacter asymbioticus (strain DSM 18221 / CIP 109841 / QLW-P1DMWA-1) (Polynucleobacter necessarius subsp. asymbioticus).